Reading from the N-terminus, the 226-residue chain is Leucyl/phenylalanyl-tRNA--protein transferase (226 aa).

Belongs to the L/F-transferase family.

Its subcellular location is the cytoplasm. The catalysed reaction is N-terminal L-lysyl-[protein] + L-leucyl-tRNA(Leu) = N-terminal L-leucyl-L-lysyl-[protein] + tRNA(Leu) + H(+). It carries out the reaction N-terminal L-arginyl-[protein] + L-leucyl-tRNA(Leu) = N-terminal L-leucyl-L-arginyl-[protein] + tRNA(Leu) + H(+). The enzyme catalyses L-phenylalanyl-tRNA(Phe) + an N-terminal L-alpha-aminoacyl-[protein] = an N-terminal L-phenylalanyl-L-alpha-aminoacyl-[protein] + tRNA(Phe). In terms of biological role, functions in the N-end rule pathway of protein degradation where it conjugates Leu, Phe and, less efficiently, Met from aminoacyl-tRNAs to the N-termini of proteins containing an N-terminal arginine or lysine. This chain is Leucyl/phenylalanyl-tRNA--protein transferase, found in Pseudomonas entomophila (strain L48).